The sequence spans 677 residues: Methionine--tRNA ligase (677 aa).

Positions 15-25 match the 'HIGH' region motif; it reads PYANGSIHLGH. Positions 146, 149, 159, and 162 each coordinate Zn(2+). A 'KMSKS' region motif is present at residues 333–337; sequence KMSKS. Lys336 is an ATP binding site. The tRNA-binding domain maps to 575 to 677; the sequence is DFAKVDLRVA…AGAKPGHQVK (103 aa).

It belongs to the class-I aminoacyl-tRNA synthetase family. MetG type 1 subfamily. As to quaternary structure, homodimer. Zn(2+) is required as a cofactor.

Its subcellular location is the cytoplasm. It catalyses the reaction tRNA(Met) + L-methionine + ATP = L-methionyl-tRNA(Met) + AMP + diphosphate. Is required not only for elongation of protein synthesis but also for the initiation of all mRNA translation through initiator tRNA(fMet) aminoacylation. The chain is Methionine--tRNA ligase from Escherichia coli (strain UTI89 / UPEC).